The following is a 719-amino-acid chain: Phosphoribosylformylglycinamidine synthase subunit PurL (719 aa).

Residue His47 is part of the active site. 2 residues coordinate ATP: Tyr50 and Lys89. Glu91 contacts Mg(2+). Residues 92–95 (SHNH) and Arg114 contribute to the substrate site. The Proton acceptor role is filled by His93. Asp115 contacts Mg(2+). Gln238 contacts substrate. Asp266 is a binding site for Mg(2+). Residue 310 to 312 (ESQ) participates in substrate binding. Positions 488 and 525 each coordinate ATP. Residue Asn526 participates in Mg(2+) binding. Ser528 is a substrate binding site.

It belongs to the FGAMS family. As to quaternary structure, monomer. Part of the FGAM synthase complex composed of 1 PurL, 1 PurQ and 2 PurS subunits.

The protein resides in the cytoplasm. The enzyme catalyses N(2)-formyl-N(1)-(5-phospho-beta-D-ribosyl)glycinamide + L-glutamine + ATP + H2O = 2-formamido-N(1)-(5-O-phospho-beta-D-ribosyl)acetamidine + L-glutamate + ADP + phosphate + H(+). It participates in purine metabolism; IMP biosynthesis via de novo pathway; 5-amino-1-(5-phospho-D-ribosyl)imidazole from N(2)-formyl-N(1)-(5-phospho-D-ribosyl)glycinamide: step 1/2. Functionally, part of the phosphoribosylformylglycinamidine synthase complex involved in the purines biosynthetic pathway. Catalyzes the ATP-dependent conversion of formylglycinamide ribonucleotide (FGAR) and glutamine to yield formylglycinamidine ribonucleotide (FGAM) and glutamate. The FGAM synthase complex is composed of three subunits. PurQ produces an ammonia molecule by converting glutamine to glutamate. PurL transfers the ammonia molecule to FGAR to form FGAM in an ATP-dependent manner. PurS interacts with PurQ and PurL and is thought to assist in the transfer of the ammonia molecule from PurQ to PurL. In Jannaschia sp. (strain CCS1), this protein is Phosphoribosylformylglycinamidine synthase subunit PurL.